Consider the following 383-residue polypeptide: L-Ala-D/L-Glu epimerase (383 aa).

Substrate contacts are provided by residues Arg-68, Tyr-94, and 198–200 (KVK). 3 residues coordinate Mg(2+): Asp-224, Glu-251, and Asp-276. Substrate contacts are provided by residues Lys-298, 326–328 (CMT), and 348–350 (DLD).

The protein belongs to the mandelate racemase/muconate lactonizing enzyme family. Requires Mg(2+) as cofactor.

It catalyses the reaction L-alanyl-L-glutamate = L-alanyl-D-glutamate. Catalyzes the epimerization of L-Ala-D-Glu to L-Ala-L-Glu and may play a role in the metabolism of the murein peptide, of which L-Ala-D-Glu is a component. Is also able to catalyze the epimerization of L-Ala-D-Asp, L-Ala-L-Glu, L-Ala-L-Ser, L-Ala-L-Pro, L-Ala-L-L-Val, L-Ala-L-Thr, L-Ala-L-Leu, L-Ala-L-Ile and L-Gly-L-Glu (in vitro). In Bacteroides thetaiotaomicron (strain ATCC 29148 / DSM 2079 / JCM 5827 / CCUG 10774 / NCTC 10582 / VPI-5482 / E50), this protein is L-Ala-D/L-Glu epimerase.